A 422-amino-acid chain; its full sequence is MIDTKALINQFDEIKSRLAIKKVSEETLSALKDMALKYKSCKQELEELQAFQNKTSKLFGEYKREQKDITALKVALDENKVKMSTLESTLKEIESHLETLAYGIPNLPDDATPEGEDENDNVEIKKVLSPPHFDFVPKEHWELGIANGWIDFEAGVKLAKSRFSVLRGMGAKLNRALINFMLDYNEKAGFESIVTPVIVNARALFGTGQLPKFEEDMFKVDSHFCDEQSEHDLYLISTSEITLTNLYQDSIIPSEELPIMLTAQTPCFRKEAGSAGRDTRGMIRQHQFDKVELVAITHPTQSAAMQEKMVQTASEILSELKLPHRLMQLCGGDLGFSASNTIDIEVWLPGQNCYREISSISNTRDFQARRAKIRYKENGKNALVHTLNGSSLAVGRTLIAIMENYQQVDGSVMIPEVLQKYL.

Residue 238 to 240 (TSE) coordinates L-serine. 269–271 (RKE) serves as a coordination point for ATP. Glutamate 292 serves as a coordination point for L-serine. An ATP-binding site is contributed by 356–359 (EISS). Serine 390 contributes to the L-serine binding site.

Belongs to the class-II aminoacyl-tRNA synthetase family. Type-1 seryl-tRNA synthetase subfamily. As to quaternary structure, homodimer. The tRNA molecule binds across the dimer.

It localises to the cytoplasm. The catalysed reaction is tRNA(Ser) + L-serine + ATP = L-seryl-tRNA(Ser) + AMP + diphosphate + H(+). The enzyme catalyses tRNA(Sec) + L-serine + ATP = L-seryl-tRNA(Sec) + AMP + diphosphate + H(+). It functions in the pathway aminoacyl-tRNA biosynthesis; selenocysteinyl-tRNA(Sec) biosynthesis; L-seryl-tRNA(Sec) from L-serine and tRNA(Sec): step 1/1. In terms of biological role, catalyzes the attachment of serine to tRNA(Ser). Is also able to aminoacylate tRNA(Sec) with serine, to form the misacylated tRNA L-seryl-tRNA(Sec), which will be further converted into selenocysteinyl-tRNA(Sec). This Helicobacter hepaticus (strain ATCC 51449 / 3B1) protein is Serine--tRNA ligase.